A 133-amino-acid chain; its full sequence is Ribonuclease VapC17 (133 aa).

Residues Asp7 and Asp93 each contribute to the Mg(2+) site. Residues 30 to 118 form the PINc domain; that stretch reads AICDIGELEW…HHDRDYKRIA (89 aa).

This sequence belongs to the PINc/VapC protein family. Mg(2+) is required as a cofactor.

In terms of biological role, toxic component of a type II toxin-antitoxin (TA) system. An RNase. The cognate antitoxin is VapB17. This is Ribonuclease VapC17 from Mycobacterium tuberculosis (strain CDC 1551 / Oshkosh).